Reading from the N-terminus, the 46-residue chain is Osteocalcin 2 (46 aa).

The region spanning 1 to 43 is the Gla domain; it reads AVPAGTLSPLQMESLREVCEVNVACDEMADTAGIVAAYTXFYG. Position 6 is a phosphothreonine (T6). The Ca(2+) site is built by E13, E17, E20, and D26. E13, E17, and E20 each carry 4-carboxyglutamate. C19 and C25 are oxidised to a cystine. E27 carries the post-translational modification 4-carboxyglutamate.

Belongs to the osteocalcin/matrix Gla protein family. Gamma-carboxyglutamate residues are formed by vitamin K dependent carboxylation by GGCX. These residues are essential for the binding of calcium.

It localises to the secreted. In terms of biological role, the carboxylated form is one of the main organic components of the bone matrix, which constitutes 1-2% of the total bone protein. The carboxylated form binds strongly to apatite and calcium. The protein is Osteocalcin 2 of Solea senegalensis (Senegalese sole).